The sequence spans 574 residues: Glutamate--tRNA ligase (574 aa).

The short motif at 109–119 is the 'HIGH' region element; the sequence is PNPDFVIHMGN.

It belongs to the class-I aminoacyl-tRNA synthetase family. Glutamate--tRNA ligase type 2 subfamily.

It localises to the cytoplasm. It carries out the reaction tRNA(Glu) + L-glutamate + ATP = L-glutamyl-tRNA(Glu) + AMP + diphosphate. Catalyzes the attachment of glutamate to tRNA(Glu) in a two-step reaction: glutamate is first activated by ATP to form Glu-AMP and then transferred to the acceptor end of tRNA(Glu). This chain is Glutamate--tRNA ligase, found in Aeropyrum pernix (strain ATCC 700893 / DSM 11879 / JCM 9820 / NBRC 100138 / K1).